The chain runs to 172 residues: MVDKRESYTKEDLLASGRGELFGAKGPQLPAPNMLMMDRVVKMTETGGNFDKGYVEAELDINPDLWFFGCHFIGDPVMPGCLGLDAMWQLVGFYLGWLGGEGKGRALGVGEVKFTGQVLPTAKKVTYRIHFKRIVNRRLIMGLADGEVLVDGRLIYTANDLKVGLFQDTSAF.

The active site involves His71.

The protein belongs to the thioester dehydratase family. FabA subfamily. As to quaternary structure, homodimer.

The protein resides in the cytoplasm. It catalyses the reaction a (3R)-hydroxyacyl-[ACP] = a (2E)-enoyl-[ACP] + H2O. It carries out the reaction (3R)-hydroxydecanoyl-[ACP] = (2E)-decenoyl-[ACP] + H2O. The catalysed reaction is (2E)-decenoyl-[ACP] = (3Z)-decenoyl-[ACP]. Its pathway is lipid metabolism; fatty acid biosynthesis. Necessary for the introduction of cis unsaturation into fatty acids. Catalyzes the dehydration of (3R)-3-hydroxydecanoyl-ACP to E-(2)-decenoyl-ACP and then its isomerization to Z-(3)-decenoyl-ACP. Can catalyze the dehydratase reaction for beta-hydroxyacyl-ACPs with saturated chain lengths up to 16:0, being most active on intermediate chain length. The polypeptide is 3-hydroxydecanoyl-[acyl-carrier-protein] dehydratase (Escherichia coli O127:H6 (strain E2348/69 / EPEC)).